The primary structure comprises 257 residues: Imidazole glycerol phosphate synthase subunit HisF (257 aa).

Residues Asp12 and Asp131 contribute to the active site.

The protein belongs to the HisA/HisF family. Heterodimer of HisH and HisF.

The protein localises to the cytoplasm. It carries out the reaction 5-[(5-phospho-1-deoxy-D-ribulos-1-ylimino)methylamino]-1-(5-phospho-beta-D-ribosyl)imidazole-4-carboxamide + L-glutamine = D-erythro-1-(imidazol-4-yl)glycerol 3-phosphate + 5-amino-1-(5-phospho-beta-D-ribosyl)imidazole-4-carboxamide + L-glutamate + H(+). The protein operates within amino-acid biosynthesis; L-histidine biosynthesis; L-histidine from 5-phospho-alpha-D-ribose 1-diphosphate: step 5/9. Functionally, IGPS catalyzes the conversion of PRFAR and glutamine to IGP, AICAR and glutamate. The HisF subunit catalyzes the cyclization activity that produces IGP and AICAR from PRFAR using the ammonia provided by the HisH subunit. This is Imidazole glycerol phosphate synthase subunit HisF from Mycobacteroides abscessus (strain ATCC 19977 / DSM 44196 / CCUG 20993 / CIP 104536 / JCM 13569 / NCTC 13031 / TMC 1543 / L948) (Mycobacterium abscessus).